The chain runs to 91 residues: MKKLVLLSAFVLLAFQVQADSIQNTDEEIKTEEQPGEENQAVSISFGDPEGYALQDAAIRRARRCPPCPSCLSCPWCPRCLRCPMCKCNPK.

A signal peptide spans 1–19; that stretch reads MKKLVLLSAFVLLAFQVQA. Positions 20 to 65 are excised as a propeptide; it reads DSIQNTDEEIKTEEQPGEENQAVSISFGDPEGYALQDAAIRRARRC. Repeat copies occupy residues 65-67, 68-70, 71-73, 74-76, 77-79, and 83-85. Residues 65–88 form a 6 X 3 AA tandem repeats of C-P-X region; it reads CPPCPSCLSCPWCPRCLRCPMCKC.

Belongs to the alpha-defensin family. In terms of tissue distribution, paneth cells of the small bowel.

It localises to the secreted. Functionally, apparent precursor of a secreted, cationic, proline- and cysteine-rich peptide that contains Cys-Pro-Xaa repeats. Unlike cryptdin, the proposed mature peptide region lacks the structural motif characteristic of defensins. It may have microbicidal activities. This Mus musculus (Mouse) protein is Alpha-defensin-related sequence 12 (Defa-rs12).